A 254-amino-acid polypeptide reads, in one-letter code: 3-deoxy-manno-octulosonate cytidylyltransferase (254 aa).

This sequence belongs to the KdsB family.

It localises to the cytoplasm. It carries out the reaction 3-deoxy-alpha-D-manno-oct-2-ulosonate + CTP = CMP-3-deoxy-beta-D-manno-octulosonate + diphosphate. Its pathway is nucleotide-sugar biosynthesis; CMP-3-deoxy-D-manno-octulosonate biosynthesis; CMP-3-deoxy-D-manno-octulosonate from 3-deoxy-D-manno-octulosonate and CTP: step 1/1. It participates in bacterial outer membrane biogenesis; lipopolysaccharide biosynthesis. Activates KDO (a required 8-carbon sugar) for incorporation into bacterial lipopolysaccharide in Gram-negative bacteria. The chain is 3-deoxy-manno-octulosonate cytidylyltransferase from Bordetella pertussis (strain Tohama I / ATCC BAA-589 / NCTC 13251).